The following is a 297-amino-acid chain: CASP-like protein 4A2 (297 aa).

Residues 1 to 136 (MKMKRTVSSN…MNGEESATTA (136 aa)) form a disordered region. Topologically, residues 1–149 (MKMKRTVSSN…ARRDDLVSVT (149 aa)) are cytoplasmic. A compositionally biased stretch (low complexity) spans 8–19 (SSNSEAYSYNES). A compositionally biased stretch (pro residues) spans 69 to 83 (LPSPIPPPPPQIPPP). The span at 93–121 (MNSSLDKSPSSMVVQNSWVREDGQQNTTR) shows a compositional bias: polar residues. The chain crosses the membrane as a helical span at residues 150-170 (ALGFRITEVILCVISFSIMAA). Residues 171–189 (DKTQGWSGDSYDRYKEYRY) lie on the Extracellular side of the membrane. Residues 190-210 (CLAVNVIAFVYSAFEACDAAC) form a helical membrane-spanning segment. The Cytoplasmic portion of the chain corresponds to 211 to 225 (YMAKESYMMNCGFHD). A helical membrane pass occupies residues 226–246 (LFVFSMDQLLAYLLMSASSCA). The Extracellular portion of the chain corresponds to 247-265 (ATRVDDWVSNWGKDEFTQM). The chain crosses the membrane as a helical span at residues 266–286 (ATASIAVSFLAFGAFAVSALI). The Cytoplasmic portion of the chain corresponds to 287–297 (SSYRLFTHASS).

This sequence belongs to the Casparian strip membrane proteins (CASP) family. As to quaternary structure, homodimer and heterodimers.

Its subcellular location is the cell membrane. This Arabidopsis lyrata subsp. lyrata (Lyre-leaved rock-cress) protein is CASP-like protein 4A2.